The sequence spans 262 residues: Acyl-[acyl-carrier-protein]--UDP-N-acetylglucosamine O-acyltransferase (262 aa).

This sequence belongs to the transferase hexapeptide repeat family. LpxA subfamily. Homotrimer.

Its subcellular location is the cytoplasm. The catalysed reaction is a (3R)-hydroxyacyl-[ACP] + UDP-N-acetyl-alpha-D-glucosamine = a UDP-3-O-[(3R)-3-hydroxyacyl]-N-acetyl-alpha-D-glucosamine + holo-[ACP]. Its pathway is glycolipid biosynthesis; lipid IV(A) biosynthesis; lipid IV(A) from (3R)-3-hydroxytetradecanoyl-[acyl-carrier-protein] and UDP-N-acetyl-alpha-D-glucosamine: step 1/6. In terms of biological role, involved in the biosynthesis of lipid A, a phosphorylated glycolipid that anchors the lipopolysaccharide to the outer membrane of the cell. This chain is Acyl-[acyl-carrier-protein]--UDP-N-acetylglucosamine O-acyltransferase, found in Histophilus somni (strain 129Pt) (Haemophilus somnus).